Consider the following 259-residue polypeptide: uncharacterized protein (259 aa).

The first 28 residues, 1-28 (MNIKRRLKYLTSCLLVSAFFWINSSAWA), serve as a signal peptide directing secretion. Transmembrane regions (helical) follow at residues 32-52 (EIPP…IYVA) and 191-211 (WGFL…GIFT).

The protein resides in the cell membrane. This is an uncharacterized protein from Coxiella burnetii (strain RSA 493 / Nine Mile phase I).